The primary structure comprises 55 residues: Ferredoxin (55 aa).

4Fe-4S ferredoxin-type domains lie at 2-26 and 27-55; these read YKIT…ISEG and SIYE…VPED. [4Fe-4S] cluster is bound by residues Cys-8, Cys-11, Cys-14, Cys-18, Cys-36, Cys-39, Cys-42, and Cys-46.

[4Fe-4S] cluster serves as cofactor.

Ferredoxins are iron-sulfur proteins that transfer electrons in a wide variety of metabolic reactions. The polypeptide is Ferredoxin (Butyribacterium methylotrophicum).